We begin with the raw amino-acid sequence, 387 residues long: 3-ketoacyl-CoA thiolase (387 aa).

The active-site Acyl-thioester intermediate is cysteine 91. Active-site proton acceptor residues include histidine 343 and cysteine 373.

Belongs to the thiolase-like superfamily. Thiolase family. As to quaternary structure, heterotetramer of two alpha chains (FadB) and two beta chains (FadA).

The protein resides in the cytoplasm. The enzyme catalyses an acyl-CoA + acetyl-CoA = a 3-oxoacyl-CoA + CoA. It participates in lipid metabolism; fatty acid beta-oxidation. Functionally, catalyzes the final step of fatty acid oxidation in which acetyl-CoA is released and the CoA ester of a fatty acid two carbons shorter is formed. This is 3-ketoacyl-CoA thiolase from Vibrio vulnificus (strain CMCP6).